We begin with the raw amino-acid sequence, 319 residues long: Dehydrogenase/reductase SDR family member 9 (319 aa).

The N-terminal stretch at 1–20 (MLLWVLALLFLCAFLWNYKG) is a signal peptide. NAD(+) contacts are provided by residues 34 to 58 (ITGC…RVIA) and Asp83. Ser164 is a substrate binding site. Residue Tyr176 is the Proton acceptor of the active site. Lys180 is an NAD(+) binding site.

Belongs to the short-chain dehydrogenases/reductases (SDR) family. As to quaternary structure, homotetramer. Highly expressed in epithelium of estrus uterus.

The protein localises to the microsome membrane. It is found in the endoplasmic reticulum membrane. It catalyses the reaction 3beta-hydroxy-5alpha-pregnane-20-one + NAD(+) = 5alpha-pregnane-3,20-dione + NADH + H(+). The catalysed reaction is 17beta-hydroxy-5alpha-androstan-3-one + NAD(+) = 5alpha-androstan-3,17-dione + NADH + H(+). The enzyme catalyses androsterone + NAD(+) = 5alpha-androstan-3,17-dione + NADH + H(+). It carries out the reaction 5alpha-androstane-3alpha,17beta-diol + NAD(+) = 17beta-hydroxy-5alpha-androstan-3-one + NADH + H(+). It catalyses the reaction all-trans-retinol + NAD(+) = all-trans-retinal + NADH + H(+). The catalysed reaction is 3alpha-hydroxy-5alpha-pregnan-20-one + NAD(+) = 5alpha-pregnane-3,20-dione + NADH + H(+). 3-alpha-hydroxysteroid dehydrogenase that converts 3-alpha-tetrahydroprogesterone (allopregnanolone) to dihydroxyprogesterone and 3-alpha-androstanediol to dihydroxyprogesterone. Plays also role in the biosynthesis of retinoic acid from retinaldehyde. Can utilize both NADH and NADPH. The chain is Dehydrogenase/reductase SDR family member 9 (Dhrs9) from Rattus norvegicus (Rat).